Consider the following 432-residue polypeptide: Gamma-glutamyl phosphate reductase (432 aa).

The protein belongs to the gamma-glutamyl phosphate reductase family.

Its subcellular location is the cytoplasm. The enzyme catalyses L-glutamate 5-semialdehyde + phosphate + NADP(+) = L-glutamyl 5-phosphate + NADPH + H(+). Its pathway is amino-acid biosynthesis; L-proline biosynthesis; L-glutamate 5-semialdehyde from L-glutamate: step 2/2. Its function is as follows. Catalyzes the NADPH-dependent reduction of L-glutamate 5-phosphate into L-glutamate 5-semialdehyde and phosphate. The product spontaneously undergoes cyclization to form 1-pyrroline-5-carboxylate. The polypeptide is Gamma-glutamyl phosphate reductase (Methylorubrum extorquens (strain CM4 / NCIMB 13688) (Methylobacterium extorquens)).